The sequence spans 65 residues: Photosystem II reaction center protein J (65 aa).

The span at 1–17 (MSTKLKGPDGRIPDRLP) shows a compositional bias: basic and acidic residues. Positions 1-20 (MSTKLKGPDGRIPDRLPDGT) are disordered. Residues 36 to 56 (LWLVATVGGMAVLSVLGLFFF) form a helical membrane-spanning segment.

The protein belongs to the PsbJ family. In terms of assembly, PSII is composed of 1 copy each of membrane proteins PsbA, PsbB, PsbC, PsbD, PsbE, PsbF, PsbH, PsbI, PsbJ, PsbK, PsbL, PsbM, PsbT, PsbX, PsbY, Psb30/Ycf12, peripheral proteins PsbO, CyanoQ (PsbQ), PsbU, PsbV and a large number of cofactors. It forms dimeric complexes.

The protein resides in the cellular thylakoid membrane. Functionally, one of the components of the core complex of photosystem II (PSII). PSII is a light-driven water:plastoquinone oxidoreductase that uses light energy to abstract electrons from H(2)O, generating O(2) and a proton gradient subsequently used for ATP formation. It consists of a core antenna complex that captures photons, and an electron transfer chain that converts photonic excitation into a charge separation. The polypeptide is Photosystem II reaction center protein J (Prochlorococcus marinus (strain MIT 9303)).